A 456-amino-acid chain; its full sequence is Adenylosuccinate lyase (456 aa).

N(6)-(1,2-dicarboxyethyl)-AMP-binding positions include 15 to 16 (RY), 90 to 92 (NHD), and 122 to 123 (TS). The active-site Proton donor/acceptor is H171. Q248 contacts N(6)-(1,2-dicarboxyethyl)-AMP. The Proton donor/acceptor role is filled by S296. Residues S297, 302–304 (KVN), N310, R336, and 341–345 (STVLR) each bind N(6)-(1,2-dicarboxyethyl)-AMP.

The protein belongs to the lyase 1 family. Adenylosuccinate lyase subfamily. As to quaternary structure, homotetramer.

The catalysed reaction is N(6)-(1,2-dicarboxyethyl)-AMP = fumarate + AMP. It catalyses the reaction (2S)-2-[5-amino-1-(5-phospho-beta-D-ribosyl)imidazole-4-carboxamido]succinate = 5-amino-1-(5-phospho-beta-D-ribosyl)imidazole-4-carboxamide + fumarate. The enzyme catalyses (2S)-2-amino-2'-deoxyadenylo-succinate = dZMP + fumarate. It functions in the pathway purine metabolism; AMP biosynthesis via de novo pathway; AMP from IMP: step 2/2. It participates in purine metabolism; IMP biosynthesis via de novo pathway; 5-amino-1-(5-phospho-D-ribosyl)imidazole-4-carboxamide from 5-amino-1-(5-phospho-D-ribosyl)imidazole-4-carboxylate: step 2/2. The protein operates within purine metabolism. Functionally, catalyzes two reactions in de novo purine nucleotide biosynthesis. Catalyzes the breakdown of 5-aminoimidazole- (N-succinylocarboxamide) ribotide (SAICAR or 2-[5-amino-1-(5-phospho-beta-D-ribosyl)imidazole-4-carboxamido]succinate) to 5-aminoimidazole-4-carboxamide ribotide (AICAR or 5-amino-1-(5-phospho-beta-D-ribosyl)imidazole-4-carboxamide) and fumarate, and of adenylosuccinate (ADS or N(6)-(1,2-dicarboxyethyl)-AMP) to adenosine monophosphate (AMP) and fumarate. In terms of biological role, (Microbial infection) Catalyzes the conversion of 2-amino-2'-deoxyadenylo-succinate to dZMP and fumarate, when the bacterium is infected by a phage that produces the substrate of this reaction, a step in the synthesis of dZTP (2-amino-2'-deoxyadenosine 5'-triphosphate), which is a nucleotide then used by the phage as a DNA polymerase substrate. The sequence is that of Adenylosuccinate lyase from Vibrio cholerae serotype O1 (strain ATCC 39541 / Classical Ogawa 395 / O395).